Reading from the N-terminus, the 450-residue chain is Glucose-6-phosphate isomerase (450 aa).

Glutamate 290 (proton donor) is an active-site residue. Catalysis depends on residues histidine 311 and lysine 425.

The protein belongs to the GPI family.

It is found in the cytoplasm. The catalysed reaction is alpha-D-glucose 6-phosphate = beta-D-fructose 6-phosphate. It participates in carbohydrate biosynthesis; gluconeogenesis. The protein operates within carbohydrate degradation; glycolysis; D-glyceraldehyde 3-phosphate and glycerone phosphate from D-glucose: step 2/4. Its function is as follows. Catalyzes the reversible isomerization of glucose-6-phosphate to fructose-6-phosphate. This chain is Glucose-6-phosphate isomerase, found in Listeria monocytogenes serovar 1/2a (strain ATCC BAA-679 / EGD-e).